The sequence spans 150 residues: Arginine repressor (150 aa).

This sequence belongs to the ArgR family.

The protein resides in the cytoplasm. It participates in amino-acid biosynthesis; L-arginine biosynthesis [regulation]. Regulates arginine biosynthesis genes. The sequence is that of Arginine repressor from Clostridium acetobutylicum (strain ATCC 824 / DSM 792 / JCM 1419 / IAM 19013 / LMG 5710 / NBRC 13948 / NRRL B-527 / VKM B-1787 / 2291 / W).